The chain runs to 149 residues: Transcriptional repressor NrdR (149 aa).

Residues 3-34 fold into a zinc finger; sequence CPFCSATDTKVIDSRLVAEGHQVRRRRECTEC. The ATP-cone domain maps to 49 to 139; sequence PRVIKRDGSR…VYRAFEDVSE (91 aa).

The protein belongs to the NrdR family. Zn(2+) serves as cofactor.

Functionally, negatively regulates transcription of bacterial ribonucleotide reductase nrd genes and operons by binding to NrdR-boxes. This is Transcriptional repressor NrdR from Shewanella baltica (strain OS223).